Here is a 395-residue protein sequence, read N- to C-terminus: Acetate kinase (395 aa).

Position 7 (asparagine 7) interacts with Mg(2+). ATP is bound at residue lysine 14. Residue arginine 88 participates in substrate binding. The active-site Proton donor/acceptor is aspartate 145. ATP is bound by residues 205 to 209 (HLGNG), 279 to 281 (DFR), and 327 to 331 (GIGEN). Mg(2+) is bound at residue glutamate 381.

This sequence belongs to the acetokinase family. In terms of assembly, homodimer. The cofactor is Mg(2+). It depends on Mn(2+) as a cofactor.

It localises to the cytoplasm. It carries out the reaction acetate + ATP = acetyl phosphate + ADP. It functions in the pathway metabolic intermediate biosynthesis; acetyl-CoA biosynthesis; acetyl-CoA from acetate: step 1/2. Functionally, catalyzes the formation of acetyl phosphate from acetate and ATP. Can also catalyze the reverse reaction. The sequence is that of Acetate kinase from Campylobacter jejuni subsp. jejuni serotype O:6 (strain 81116 / NCTC 11828).